We begin with the raw amino-acid sequence, 355 residues long: Putative testis-specific Y-encoded-like protein 3 (355 aa).

Residues 1 to 131 (MADKRAGTPE…GEEKQEVAAE (131 aa)) are disordered. Basic and acidic residues predominate over residues 93–128 (ASEKAEDANKEEGAIFKKEPAEEVEKQQEGEEKQEV).

The protein belongs to the nucleosome assembly protein (NAP) family.

The sequence is that of Putative testis-specific Y-encoded-like protein 3 (TSPY26P) from Homo sapiens (Human).